A 345-amino-acid polypeptide reads, in one-letter code: N-acetyl-gamma-glutamyl-phosphate reductase (345 aa).

The active site involves C149.

This sequence belongs to the NAGSA dehydrogenase family. Type 1 subfamily.

It is found in the cytoplasm. The enzyme catalyses N-acetyl-L-glutamate 5-semialdehyde + phosphate + NADP(+) = N-acetyl-L-glutamyl 5-phosphate + NADPH + H(+). The protein operates within amino-acid biosynthesis; L-arginine biosynthesis; N(2)-acetyl-L-ornithine from L-glutamate: step 3/4. Functionally, catalyzes the NADPH-dependent reduction of N-acetyl-5-glutamyl phosphate to yield N-acetyl-L-glutamate 5-semialdehyde. This is N-acetyl-gamma-glutamyl-phosphate reductase from Desulforapulum autotrophicum (strain ATCC 43914 / DSM 3382 / VKM B-1955 / HRM2) (Desulfobacterium autotrophicum).